We begin with the raw amino-acid sequence, 130 residues long: Small ribosomal subunit protein uS9 (130 aa).

It belongs to the universal ribosomal protein uS9 family.

The chain is Small ribosomal subunit protein uS9 from Aeromonas salmonicida (strain A449).